A 234-amino-acid chain; its full sequence is UPF0173 metal-dependent hydrolase Smed_0942 (234 aa).

Belongs to the UPF0173 family.

The chain is UPF0173 metal-dependent hydrolase Smed_0942 from Sinorhizobium medicae (strain WSM419) (Ensifer medicae).